Reading from the N-terminus, the 307-residue chain is 4-diphosphocytidyl-2-C-methyl-D-erythritol kinase (307 aa).

Residue Lys-9 is part of the active site. 94–104 (PIGAGLAGGSS) contributes to the ATP binding site. The active site involves Asp-136.

Belongs to the GHMP kinase family. IspE subfamily.

It catalyses the reaction 4-CDP-2-C-methyl-D-erythritol + ATP = 4-CDP-2-C-methyl-D-erythritol 2-phosphate + ADP + H(+). It participates in isoprenoid biosynthesis; isopentenyl diphosphate biosynthesis via DXP pathway; isopentenyl diphosphate from 1-deoxy-D-xylulose 5-phosphate: step 3/6. Functionally, catalyzes the phosphorylation of the position 2 hydroxy group of 4-diphosphocytidyl-2C-methyl-D-erythritol. The protein is 4-diphosphocytidyl-2-C-methyl-D-erythritol kinase of Synechococcus sp. (strain CC9902).